The primary structure comprises 266 residues: MAVGKNKRLTKGGKKGAKKKIVDPFSKKDWYDVKAPAMFNIRNLGKTLVTRTQGTKIASDGLKGRVFEVSLADLQNDEVAFRKFKLITEDVQGKNCLTNFHGMDLTRDKMCSMVKKWQTMIEAHVDVKTTDGYLLRLFCVGFTKKRNNQVRKTSYAQHQQVRQIRKKMMEIMTREVQTNDLKEVVNKLIPDSVGKDIEKACQSIYPLHDVYVRKVKMLKKPKFELGKLMELHGEGGAGGAAKASGDDTGAKVERADGYEPPIQETV.

The interval 235-266 (GGAGGAAKASGDDTGAKVERADGYEPPIQETV) is disordered. The segment covering 244–257 (SGDDTGAKVERADG) has biased composition (basic and acidic residues).

Belongs to the eukaryotic ribosomal protein eS1 family. In terms of assembly, component of the small ribosomal subunit. Mature ribosomes consist of a small (40S) and a large (60S) subunit. The 40S subunit contains about 33 different proteins and 1 molecule of RNA (18S). The 60S subunit contains about 49 different proteins and 3 molecules of RNA (28S, 5.8S and 5S).

The protein localises to the cytoplasm. Functionally, component of the small ribosomal subunit. The ribosome is a large ribonucleoprotein complex responsible for the synthesis of proteins in the cell. This is Small ribosomal subunit protein eS1 (rps3a) from Oryzias latipes (Japanese rice fish).